The chain runs to 182 residues: Large ribosomal subunit protein uL16 (182 aa).

This sequence belongs to the universal ribosomal protein uL16 family. As to quaternary structure, part of the 50S ribosomal subunit.

This chain is Large ribosomal subunit protein uL16, found in Thermococcus kodakarensis (strain ATCC BAA-918 / JCM 12380 / KOD1) (Pyrococcus kodakaraensis (strain KOD1)).